A 422-amino-acid polypeptide reads, in one-letter code: MTVRTKVSTKDIDEAYLRLKNIVKETPLQFDHYLSQKYNCNVYLKREDLQWVRSFKLRGAYNAISVLSNEEKNKGITCASAGNHAQGVAYTAKKLNLKAVIFMPVTTPRQKINQVKFFGDSNVEIVLIGDTFDHCLAQALNYTKQHKMNFIDPFNNVYTIAGQGTLAKEILNQAEKEDKTFDYVFAAIGGGGLISGVSTYFKAHSPHTKIIGVEPTGASSMYQSVVINHSIVTLENIDKFVDGASVARVGDITFDIAKDKVDDYVQVDEGAVCSTILDMYSKQAIVAEPAGALSVSALEQYKKQIENKTIVCIVSGGNNDINRMKEIEERSLLFEEMKHYFILNFPQRPGALREFVNDVLGPQDDITKFEYLKKTSQNTGTVIIGIQLKHHDDLIQLKDRVCQFDPSNIYINENKMLYSLLI.

At Lys56 the chain carries N6-(pyridoxal phosphate)lysine. Pyridoxal 5'-phosphate is bound by residues Asn83, 189-193 (GGGGL), and Ser315. The 75-residue stretch at 339-413 (HYFILNFPQR…FDPSNIYINE (75 aa)) folds into the ACT-like domain.

This sequence belongs to the serine/threonine dehydratase family. As to quaternary structure, homotetramer. Requires pyridoxal 5'-phosphate as cofactor.

The enzyme catalyses L-threonine = 2-oxobutanoate + NH4(+). It participates in amino-acid biosynthesis; L-isoleucine biosynthesis; 2-oxobutanoate from L-threonine: step 1/1. Functionally, catalyzes the anaerobic formation of alpha-ketobutyrate and ammonia from threonine in a two-step reaction. The first step involved a dehydration of threonine and a production of enamine intermediates (aminocrotonate), which tautomerizes to its imine form (iminobutyrate). Both intermediates are unstable and short-lived. The second step is the nonenzymatic hydrolysis of the enamine/imine intermediates to form 2-ketobutyrate and free ammonia. In the low water environment of the cell, the second step is accelerated by RidA. This is L-threonine dehydratase biosynthetic IlvA (ilvA) from Staphylococcus epidermidis (strain ATCC 12228 / FDA PCI 1200).